We begin with the raw amino-acid sequence, 358 residues long: Uroporphyrinogen decarboxylase (358 aa).

Substrate-binding positions include 29-33 (RQAGR), phenylalanine 48, aspartate 79, tyrosine 155, serine 210, and histidine 330.

The protein belongs to the uroporphyrinogen decarboxylase family. Homodimer.

It localises to the cytoplasm. The catalysed reaction is uroporphyrinogen III + 4 H(+) = coproporphyrinogen III + 4 CO2. It functions in the pathway porphyrin-containing compound metabolism; protoporphyrin-IX biosynthesis; coproporphyrinogen-III from 5-aminolevulinate: step 4/4. Its function is as follows. Catalyzes the decarboxylation of four acetate groups of uroporphyrinogen-III to yield coproporphyrinogen-III. This is Uroporphyrinogen decarboxylase from Bordetella parapertussis (strain 12822 / ATCC BAA-587 / NCTC 13253).